Reading from the N-terminus, the 473-residue chain is Protein nucleotidyltransferase YdiU (473 aa).

Residues Gly79, Gly81, Arg82, Lys102, Asp114, Gly115, Arg165, and Arg172 each contribute to the ATP site. Asp241 (proton acceptor) is an active-site residue. Asn242 and Asp251 together coordinate Mg(2+). Residue Asp251 participates in ATP binding.

It belongs to the SELO family. The cofactor is Mg(2+). Mn(2+) serves as cofactor.

The enzyme catalyses L-seryl-[protein] + ATP = 3-O-(5'-adenylyl)-L-seryl-[protein] + diphosphate. It carries out the reaction L-threonyl-[protein] + ATP = 3-O-(5'-adenylyl)-L-threonyl-[protein] + diphosphate. The catalysed reaction is L-tyrosyl-[protein] + ATP = O-(5'-adenylyl)-L-tyrosyl-[protein] + diphosphate. It catalyses the reaction L-histidyl-[protein] + UTP = N(tele)-(5'-uridylyl)-L-histidyl-[protein] + diphosphate. The enzyme catalyses L-seryl-[protein] + UTP = O-(5'-uridylyl)-L-seryl-[protein] + diphosphate. It carries out the reaction L-tyrosyl-[protein] + UTP = O-(5'-uridylyl)-L-tyrosyl-[protein] + diphosphate. In terms of biological role, nucleotidyltransferase involved in the post-translational modification of proteins. It can catalyze the addition of adenosine monophosphate (AMP) or uridine monophosphate (UMP) to a protein, resulting in modifications known as AMPylation and UMPylation. The chain is Protein nucleotidyltransferase YdiU from Marinomonas sp. (strain MWYL1).